Here is a 337-residue protein sequence, read N- to C-terminus: MGKIKIGINGFGRIGRLVARVALQSEDVELVAVNDPFITTEYMTYMFKYDTVHGQWKHHEVKVKDSKTLIFGTKEVAVFGCRNPEEIPWAAAGAEYVVESTGVFTDKDKAAAHLKGGAKKVVISAPSKDAPMFVVGVNEKEYKSDVNIVSNASCTTNCLAPLAKVINDRFGIVEGLMTTVHAITATQKTVDGPSMKDWRGGRAASFNIIPSSTGAAKAVGKVLPALNGKLTGMAFRVPTVDVSVVDLTVRLEKPASYDQIKAAIKEEAEGKLKGILGYVEEDLVSTDFQGDSRSSIFDAKAGIALSDTFVKLVSWYDNEWGYSTRVIDLIRHMHSTN.

Residues 13–14, Asp-35, and Arg-82 each bind NAD(+); that span reads RI. D-glyceraldehyde 3-phosphate contacts are provided by residues 153 to 155, Thr-184, 213 to 214, and Arg-236; these read SCT and TG. Cys-154 acts as the Nucleophile in catalysis. Residue Asn-318 participates in NAD(+) binding.

Belongs to the glyceraldehyde-3-phosphate dehydrogenase family. In terms of assembly, homotetramer.

Its subcellular location is the cytoplasm. It carries out the reaction D-glyceraldehyde 3-phosphate + phosphate + NAD(+) = (2R)-3-phospho-glyceroyl phosphate + NADH + H(+). Its pathway is carbohydrate degradation; glycolysis; pyruvate from D-glyceraldehyde 3-phosphate: step 1/5. Functionally, key enzyme in glycolysis that catalyzes the first step of the pathway by converting D-glyceraldehyde 3-phosphate (G3P) into 3-phospho-D-glyceroyl phosphate. Essential for the maintenance of cellular ATP levels and carbohydrate metabolism. In Oryza sativa subsp. japonica (Rice), this protein is Glyceraldehyde-3-phosphate dehydrogenase 3, cytosolic (GAPC3).